The sequence spans 718 residues: Catalase-peroxidase (718 aa).

Positions 98–219 form a cross-link, tryptophyl-tyrosyl-methioninium (Trp-Tyr) (with M-245); sequence WHAAGTYRMG…LAATEMGLIY (122 aa). Catalysis depends on His99, which acts as the Proton acceptor. Residues 219 to 245 constitute a cross-link (tryptophyl-tyrosyl-methioninium (Tyr-Met) (with W-98)); that stretch reads YVNPEGPQASGDPRSAAPFIRATFGNM. Residue His260 participates in heme b binding.

Belongs to the peroxidase family. Peroxidase/catalase subfamily. In terms of assembly, homodimer or homotetramer. It depends on heme b as a cofactor. In terms of processing, formation of the three residue Trp-Tyr-Met cross-link is important for the catalase, but not the peroxidase activity of the enzyme.

It catalyses the reaction H2O2 + AH2 = A + 2 H2O. It carries out the reaction 2 H2O2 = O2 + 2 H2O. In terms of biological role, bifunctional enzyme with both catalase and broad-spectrum peroxidase activity. In Acinetobacter baumannii (strain AB307-0294), this protein is Catalase-peroxidase.